A 1036-amino-acid chain; its full sequence is MAAMAPALTDAAAEAHHIRFKLAPPSSTLSPGSAENNGNANILISANGTKRKAIAAEDPSLDFRNNPTKEDLGKLQPLVASYLCSDVTSVPAKESLKLQGVFSKQTVLKSHPLLSQSYELRAELLGRQPVLEFSLENLRTMNTSGQTALPQAPVNGLAKKLTKSSTHSDHDNSSSLNGGKRSLTSSSLQGGEVGGPDSGNLKGGMTNCTLPHRSLDIQHTTLYSNNSTANKSSVNSMDQPALQGSSRLSPSTDSSSNLTNVKLEVKKSPLSSILFSALDSDTRITALLRRQADIEIRARRLQKRLQVVQAKQVERHLQHQLGGFLETTLSKLPNLESLRSRSQLMLTRKAEAALRKAASESATSEGLSNFLKSDSISEELERFTASGIANLRCSEQAFDSDVTDSSSGGESDIEEEELTRADPEQCHVPLKRRSEWRWAADRAAIVSRWNWLQAHVSDLEYRIRQQTDIYKQIRANKGLIVLGEAPFPDHTTDLLSLSSEVKTDHGRDKLIESVSQPSENHGILVSNITESLSTKSCGAPRPVNGVVNSLQPVLADQVPGDSSDAEEQLHKKQRLNLVSSSDGTCVAARTRPVLTCKKRRLVRPSSIVPLSKKVHRNVRSGCDVNPSCALCGSGSVNTMPPEIHYEAPLLERLSQLDSCVHPVLAFPDDVPTSLHFQSMLKSQWQNKPFDKIKPTKKFSLKHRATMPCSLSDPVRKDRHKLVNSFLTTAMLKHHTDMSSPSYLTATHHPPHSPLVRQLSTSSDTSTPTSSGSQVAASTSQPVRRRRGESSFDINNIVIPMSVAATTRVEKLQYKEILTPSWREVDVQSLKGSPDEENEEIEDLSDAAFAALHAKCEEMERARWLWTTSVPPQRRGSRSYRSSDGRTTPQLGSANPSTPQPASPDVSSSHSLSEFSHGQSPRSPISPELHSAPLTPVARDSLRHLASEDTRCSTPELGLDEQSVQPWERRTFPLAYSPQAECEEQLDAQDTAARCTRRTSGSKTGREAEVAPTSPPVVPLKSRHLAATVTAQRPAHR.

An N6-acetyllysine modification is found at lysine 104. Disordered regions lie at residues 145-211 and 226-257; these read GQTA…CTLP and NSTANKSSVNSMDQPALQGSSRLSPSTDSSSN. Polar residues predominate over residues 226–244; the sequence is NSTANKSSVNSMDQPALQG. Positions 245–256 are enriched in low complexity; sequence SSRLSPSTDSSS. Serine 249 carries the phosphoserine modification. Lysine 262 is covalently cross-linked (Glycyl lysine isopeptide (Lys-Gly) (interchain with G-Cter in SUMO2)). Serine 268 is subject to Phosphoserine. The stretch at 285-312 forms a coiled coil; that stretch reads TALLRRQADIEIRARRLQKRLQVVQAKQ. Lysine 331 is covalently cross-linked (Glycyl lysine isopeptide (Lys-Gly) (interchain with G-Cter in SUMO2)). Disordered stretches follow at residues 399-423 and 739-787; these read DSDVTDSSSGGESDIEEEELTRADP and SPSY…RRRG. Low complexity predominate over residues 759–772; the sequence is STSSDTSTPTSSGS. The tract at residues 781-813 is required for activation of KAT8 histone acetyltransferase activity; sequence PVRRRRGESSFDINNIVIPMSVAATTRVEKLQY. Positions 815–966 constitute a PEHE domain; sequence EILTPSWREV…GLDEQSVQPW (152 aa). An interaction with KAT8 HAT domain region spans residues 841-859; it reads EDLSDAAFAALHAKCEEME. The tract at residues 869–931 is disordered; it reads VPPQRRGSRS…SPISPELHSA (63 aa). Over residues 886–896 the composition is skewed to polar residues; that stretch reads TTPQLGSANPS. The span at 906-919 shows a compositional bias: low complexity; the sequence is SSSHSLSEFSHGQS. Residues serine 922 and serine 925 each carry the phosphoserine modification. Phosphothreonine is present on threonine 934. Residue serine 976 is modified to Phosphoserine. Residues 989–1020 are disordered; it reads DTAARCTRRTSGSKTGREAEVAPTSPPVVPLK.

Component of the NSL complex at least composed of MOF/KAT8, KANSL1, KANSL2, KANSL3, MCRS1, PHF20, OGT1/OGT, WDR5 and HCFC1. Interacts (via PEHE domain) with KAT8 (via HAT domain); the interaction is direct. Component of some MLL1/MLL complex, at least composed of the core components KMT2A/MLL1, ASH2L, HCFC1, WDR5 and RBBP5, as well as the facultative components BACC1, CHD8, E2F6, HSP70, INO80C, KANSL1, LAS1L, MAX, MCRS1, MGA, KAT8/MOF, PELP1, PHF20, PRP31, RING2, RUVB1/TIP49A, RUVB2/TIP49B, SENP3, TAF1, TAF4, TAF6, TAF7, TAF9 and TEX10.

Its subcellular location is the nucleus. The protein resides in the chromosome. The protein localises to the centromere. It is found in the kinetochore. It localises to the mitochondrion. Its subcellular location is the cytoplasm. The protein resides in the cytoskeleton. The protein localises to the spindle pole. In terms of biological role, non-catalytic component of the NSL histone acetyltransferase complex, a multiprotein complex that mediates histone H4 acetylation at 'Lys-5'- and 'Lys-8' (H4K5ac and H4K8ac) at transcription start sites and promotes transcription initiation. The NSL complex also acts as a regulator of gene expression in mitochondria. In addition to its role in transcription, KANSL1 also plays an essential role in spindle assembly during mitosis. Associates with microtubule ends and contributes to microtubule stability. The chain is KAT8 regulatory NSL complex subunit 1 (Kansl1) from Mus musculus (Mouse).